A 232-amino-acid polypeptide reads, in one-letter code: Gene 65 protein (232 aa).

The polypeptide is Gene 65 protein (65) (Mycobacterium phage D29 (Mycobacteriophage D29)).